The primary structure comprises 263 residues: 3-methyl-2-oxobutanoate hydroxymethyltransferase (263 aa).

Residues D45 and D84 each coordinate Mg(2+). Residues 45–46, D84, and K112 each bind 3-methyl-2-oxobutanoate; that span reads DS. Residue E114 coordinates Mg(2+). E180 (proton acceptor) is an active-site residue.

This sequence belongs to the PanB family. In terms of assembly, homodecamer; pentamer of dimers. Mg(2+) serves as cofactor.

The protein localises to the cytoplasm. The enzyme catalyses 3-methyl-2-oxobutanoate + (6R)-5,10-methylene-5,6,7,8-tetrahydrofolate + H2O = 2-dehydropantoate + (6S)-5,6,7,8-tetrahydrofolate. The protein operates within cofactor biosynthesis; (R)-pantothenate biosynthesis; (R)-pantoate from 3-methyl-2-oxobutanoate: step 1/2. In terms of biological role, catalyzes the reversible reaction in which hydroxymethyl group from 5,10-methylenetetrahydrofolate is transferred onto alpha-ketoisovalerate to form ketopantoate. This is 3-methyl-2-oxobutanoate hydroxymethyltransferase from Klebsiella pneumoniae (strain 342).